The following is a 266-amino-acid chain: Gasdermin bGSDM (266 aa).

The next 4 membrane-spanning stretches (beta stranded) occupy residues 65-81, 93-113, 162-181, and 187-203; these read FSGQ…GADL, EDKL…FAYE, QFTV…EAAV, and AHAS…SLQT. Positions 248–266 are C-terminal region; it reads GEEDFSVQPLQAPSGLLKL.

The protein belongs to the bacterial gasdermin family. Monomer. As to quaternary structure, forms large, homooligomeric ring-shaped pores when inserted in membranes.

The protein resides in the cytoplasm. The protein localises to the cell membrane. With respect to regulation, the full-length protein before cleavage is inactive: intramolecular interactions between the N-terminal domain and the C-terminal region mediate autoinhibition. The pyroptosis-like-inducing activity is carried by the released N-terminal domain (Gasdermin bGSDM, N-terminus). Precursor of a pore-forming protein involved in defense against bacteriophages. Cleavage of this precursor by its dedicated protease releases the active moiety (gasdermin bGSDM, N-terminus) which inserts into membranes, forming pores and triggering cell death. Expression of bGSDM and the neighboring protease gene (Ga0307981_100051430) is highly toxic in E.coli. Functionally, pore-forming protein that causes membrane permeabilization via a pyroptosis-like activity. This is the active form which makes ring-like pores with an interior pore diameter of 130-190 Angstroms, when integrated in liposomes. The polypeptide is Gasdermin bGSDM (Unknown prokaryotic organism).